Consider the following 187-residue polypeptide: Elongation factor P (187 aa).

This sequence belongs to the elongation factor P family.

It is found in the cytoplasm. Its pathway is protein biosynthesis; polypeptide chain elongation. Involved in peptide bond synthesis. Stimulates efficient translation and peptide-bond synthesis on native or reconstituted 70S ribosomes in vitro. Probably functions indirectly by altering the affinity of the ribosome for aminoacyl-tRNA, thus increasing their reactivity as acceptors for peptidyl transferase. In Jannaschia sp. (strain CCS1), this protein is Elongation factor P.